Here is a 349-residue protein sequence, read N- to C-terminus: Lipoyl synthase (349 aa).

7 residues coordinate [4Fe-4S] cluster: cysteine 55, cysteine 60, cysteine 66, cysteine 81, cysteine 85, cysteine 88, and serine 292. Residues 67–281 (WEDREATFLI…SDAAYELGIK (215 aa)) enclose the Radical SAM core domain. The interval 321-349 (LDSTTSQEASTLLERYGASEDTPVTASRR) is disordered.

It belongs to the radical SAM superfamily. Lipoyl synthase family. [4Fe-4S] cluster is required as a cofactor.

It is found in the cytoplasm. It catalyses the reaction [[Fe-S] cluster scaffold protein carrying a second [4Fe-4S](2+) cluster] + N(6)-octanoyl-L-lysyl-[protein] + 2 oxidized [2Fe-2S]-[ferredoxin] + 2 S-adenosyl-L-methionine + 4 H(+) = [[Fe-S] cluster scaffold protein] + N(6)-[(R)-dihydrolipoyl]-L-lysyl-[protein] + 4 Fe(3+) + 2 hydrogen sulfide + 2 5'-deoxyadenosine + 2 L-methionine + 2 reduced [2Fe-2S]-[ferredoxin]. The protein operates within protein modification; protein lipoylation via endogenous pathway; protein N(6)-(lipoyl)lysine from octanoyl-[acyl-carrier-protein]: step 2/2. Its function is as follows. Catalyzes the radical-mediated insertion of two sulfur atoms into the C-6 and C-8 positions of the octanoyl moiety bound to the lipoyl domains of lipoate-dependent enzymes, thereby converting the octanoylated domains into lipoylated derivatives. The chain is Lipoyl synthase from Corynebacterium jeikeium (strain K411).